Consider the following 1187-residue polypeptide: Tyrosine-protein phosphatase non-receptor type 14 (1187 aa).

Residues 21–306 enclose the FERM domain; the sequence is FVTRIRLLDS…TRHKFYKQNK (286 aa). Phosphoserine occurs at positions 314, 461, and 486. Positions 510–524 are enriched in polar residues; that stretch reads LVSPSDQRNPKNNVV. The disordered stretch occupies residues 510–531; sequence LVSPSDQRNPKNNVVPSKPGAS. Serine 591, serine 593, serine 594, and serine 642 each carry phosphoserine. 2 disordered regions span residues 671-690 and 787-824; these read LREQGPPEEGSGSHEVPQLP and KAISMSRTDPPAVNGASLGPSISEPDLTSVKERVKKEP. Over residues 815-824 the composition is skewed to basic and acidic residues; it reads SVKERVKKEP. Serine 831 is modified (phosphoserine). Positions 909 to 1180 constitute a Tyrosine-protein phosphatase domain; the sequence is VFTEYEQIPK…KFVYQVLIQF (272 aa). Residues aspartate 1079, 1121-1127, and glutamine 1165 each bind substrate; that span reads CSAGVGR. Cysteine 1121 (phosphocysteine intermediate) is an active-site residue.

Belongs to the protein-tyrosine phosphatase family. Non-receptor class subfamily. In terms of assembly, interacts with FLT4; the interaction is enhanced by stimulation with VEGFC. Interacts (via PPxY motifs) with YAP1 (via WW domains); this interaction leads to the cytoplasmic sequestration of YAP1 and inhibits its transcriptional co-activator activity. Post-translationally, ubiquitinated by the ECS (Elongin BC-CUL2/5-SOCS-box protein)/LRR1 E3 ligase complex and subsequently targeted to proteasomal degradation. As to expression, ubiquitous.

The protein resides in the cytoplasm. It localises to the cytoskeleton. The protein localises to the nucleus. The enzyme catalyses O-phospho-L-tyrosyl-[protein] + H2O = L-tyrosyl-[protein] + phosphate. Protein tyrosine phosphatase which may play a role in the regulation of lymphangiogenesis, cell-cell adhesion, cell-matrix adhesion, cell migration, cell growth and also regulates TGF-beta gene expression, thereby modulating epithelial-mesenchymal transition. Mediates beta-catenin dephosphorylation at adhesion junctions. Acts as a negative regulator of the oncogenic property of YAP, a downstream target of the hippo pathway, in a cell density-dependent manner. May function as a tumor suppressor. This chain is Tyrosine-protein phosphatase non-receptor type 14 (PTPN14), found in Homo sapiens (Human).